Reading from the N-terminus, the 325-residue chain is Acetyl-coenzyme A carboxylase carboxyl transferase subunit alpha (325 aa).

Residues 35–292 form the CoA carboxyltransferase C-terminal domain; it reads EIEKLEARLT…DRVLRASLKQ (258 aa).

The protein belongs to the AccA family. Acetyl-CoA carboxylase is a heterohexamer composed of biotin carboxyl carrier protein (AccB), biotin carboxylase (AccC) and two subunits each of ACCase subunit alpha (AccA) and ACCase subunit beta (AccD).

The protein resides in the cytoplasm. The enzyme catalyses N(6)-carboxybiotinyl-L-lysyl-[protein] + acetyl-CoA = N(6)-biotinyl-L-lysyl-[protein] + malonyl-CoA. The protein operates within lipid metabolism; malonyl-CoA biosynthesis; malonyl-CoA from acetyl-CoA: step 1/1. Component of the acetyl coenzyme A carboxylase (ACC) complex. First, biotin carboxylase catalyzes the carboxylation of biotin on its carrier protein (BCCP) and then the CO(2) group is transferred by the carboxyltransferase to acetyl-CoA to form malonyl-CoA. The sequence is that of Acetyl-coenzyme A carboxylase carboxyl transferase subunit alpha from Geobacillus thermodenitrificans (strain NG80-2).